Here is a 113-residue protein sequence, read N- to C-terminus: Bactofilin BacN (113 aa).

This sequence belongs to the bactofilin family. Interacts with BacO and BacP, the 3 proteins colocalize as an extended structure.

Its subcellular location is the cytoplasm. The protein localises to the cytoskeleton. In terms of biological role, a non-essential component of the chromosome segregation machinery. Positions the ParA-ParB-parS chromosome segregation machinery within the cell; BacP seems to be the most important bactofilin in this process. Forms a heteropolymeric, subpolar scaffold in the cell; BacP probably forms the core, BacO contributes to position and integrity while BacN does not seem to contribute to assembly. The chain is Bactofilin BacN from Myxococcus xanthus (strain DK1622).